A 332-amino-acid polypeptide reads, in one-letter code: Tetraacyldisaccharide 4'-kinase (332 aa).

Position 52–59 (52–59 (TLGGAGKT)) interacts with ATP.

This sequence belongs to the LpxK family.

It carries out the reaction a lipid A disaccharide + ATP = a lipid IVA + ADP + H(+). The protein operates within glycolipid biosynthesis; lipid IV(A) biosynthesis; lipid IV(A) from (3R)-3-hydroxytetradecanoyl-[acyl-carrier-protein] and UDP-N-acetyl-alpha-D-glucosamine: step 6/6. Its function is as follows. Transfers the gamma-phosphate of ATP to the 4'-position of a tetraacyldisaccharide 1-phosphate intermediate (termed DS-1-P) to form tetraacyldisaccharide 1,4'-bis-phosphate (lipid IVA). In Methylobacterium sp. (strain 4-46), this protein is Tetraacyldisaccharide 4'-kinase.